The chain runs to 341 residues: N-acetyl-gamma-glutamyl-phosphate reductase (341 aa).

The active site involves Cys-148.

Belongs to the NAGSA dehydrogenase family. Type 1 subfamily.

Its subcellular location is the cytoplasm. It catalyses the reaction N-acetyl-L-glutamate 5-semialdehyde + phosphate + NADP(+) = N-acetyl-L-glutamyl 5-phosphate + NADPH + H(+). Its pathway is amino-acid biosynthesis; L-arginine biosynthesis; N(2)-acetyl-L-ornithine from L-glutamate: step 3/4. Functionally, catalyzes the NADPH-dependent reduction of N-acetyl-5-glutamyl phosphate to yield N-acetyl-L-glutamate 5-semialdehyde. The protein is N-acetyl-gamma-glutamyl-phosphate reductase of Pseudothermotoga lettingae (strain ATCC BAA-301 / DSM 14385 / NBRC 107922 / TMO) (Thermotoga lettingae).